Reading from the N-terminus, the 346-residue chain is Coproporphyrin III ferrochelatase (346 aa).

Residues serine 52 and tyrosine 121 each contribute to the Fe-coproporphyrin III site. Fe(2+) contacts are provided by histidine 181 and glutamate 264.

It belongs to the ferrochelatase family.

The protein resides in the cytoplasm. The enzyme catalyses Fe-coproporphyrin III + 2 H(+) = coproporphyrin III + Fe(2+). It participates in porphyrin-containing compound metabolism; protoheme biosynthesis. In terms of biological role, involved in coproporphyrin-dependent heme b biosynthesis. Catalyzes the insertion of ferrous iron into coproporphyrin III to form Fe-coproporphyrin III. This Mycobacterium sp. (strain JLS) protein is Coproporphyrin III ferrochelatase.